A 1006-amino-acid chain; its full sequence is Probable beta-galactosidase A (1006 aa).

Positions 1–18 (MKLLSVCAVALLAAQAAG) are cleaved as a signal peptide. Residues Tyr-96, Asn-140, Ala-141, and Glu-142 each coordinate substrate. Asn-156 carries an N-linked (GlcNAc...) asparagine glycan. Asn-199 serves as a coordination point for substrate. Glu-200 acts as the Proton donor in catalysis. A disulfide bridge links Cys-205 with Cys-206. An N-linked (GlcNAc...) asparagine glycan is attached at Asn-207. A substrate-binding site is contributed by Tyr-260. A disulfide bridge connects residues Cys-266 and Cys-315. The Nucleophile role is filled by Glu-298. Tyr-364 provides a ligand contact to substrate. N-linked (GlcNAc...) asparagine glycosylation is found at Asn-373, Asn-402, Asn-422, Asn-622, Asn-777, and Asn-914.

It belongs to the glycosyl hydrolase 35 family.

The protein localises to the secreted. It catalyses the reaction Hydrolysis of terminal non-reducing beta-D-galactose residues in beta-D-galactosides.. Its function is as follows. Cleaves beta-linked terminal galactosyl residues from gangliosides, glycoproteins, and glycosaminoglycans. The chain is Probable beta-galactosidase A (lacA) from Neosartorya fischeri (strain ATCC 1020 / DSM 3700 / CBS 544.65 / FGSC A1164 / JCM 1740 / NRRL 181 / WB 181) (Aspergillus fischerianus).